The sequence spans 109 residues: Aquaporin-2 (109 aa).

Over 1 to 6 (SIAFSR) the chain is Cytoplasmic. A helical membrane pass occupies residues 7–27 (AVFAEFLATLLFVFFGLGSAL). The Extracellular portion of the chain corresponds to 28-35 (NWPSALPS). The chain crosses the membrane as a helical span at residues 36-54 (TLQIAMAFGLGIGTLVQAL). Topologically, residues 55–59 (GHVSG) are cytoplasmic. The discontinuously helical intramembrane region spans 60–69 (AHINPAVTVA). The NPA 1 signature appears at 63–65 (NPA). The Cytoplasmic portion of the chain corresponds to 70–80 (CLVGCHVSFLR). Residues 81-102 (AAFYVAAQLLGAVAGAALLHEI) traverse the membrane as a helical segment. The Extracellular portion of the chain corresponds to 103-109 (TPAEVRG).

It belongs to the MIP/aquaporin (TC 1.A.8) family. As to quaternary structure, homotetramer. Serine phosphorylation is necessary and sufficient for expression at the apical membrane. Endocytosis is not phosphorylation-dependent. Post-translationally, N-glycosylated.

It is found in the apical cell membrane. The protein resides in the basolateral cell membrane. The protein localises to the cell membrane. It localises to the cytoplasmic vesicle membrane. Its subcellular location is the golgi apparatus. It is found in the trans-Golgi network membrane. It catalyses the reaction H2O(in) = H2O(out). It carries out the reaction glycerol(in) = glycerol(out). Functionally, forms a water-specific channel that provides the plasma membranes of renal collecting duct with high permeability to water, thereby permitting water to move in the direction of an osmotic gradient. Plays an essential role in renal water homeostasis. Could also be permeable to glycerol. The protein is Aquaporin-2 of Oryctolagus cuniculus (Rabbit).